The sequence spans 223 residues: MSTSLTTCEWKKVFYEKMEVAKPADSWELIIDPTLKPNELGPGWKQYLEQHASGRFHCSWCWHTWQSANVVILFHMHLDRAQRVGSVRMRVFKQLCYQCGTSRLDESSMLEENIEGLVDNLITSLREQCYDEDGGQYRIHVASRPDSGLHRSEFCEACQEGIVHWKPSEKLLEEDAAYTDASKKKGQAGFISSFFSFRWCLFWGTLCLVIVYLQFFRGRSGFL.

Over 1 to 193 (MSTSLTTCEW…KKGQAGFISS (193 aa)) the chain is Cytoplasmic. Residues 52-161 (ASGRFHCSWC…SEFCEACQEG (110 aa)) form a 3CxxC-type zinc finger. A helical transmembrane segment spans residues 194–216 (FFSFRWCLFWGTLCLVIVYLQFF). The Extracellular segment spans residues 217–223 (RGRSGFL).

Belongs to the TMEM7 family. In terms of assembly, interacts with olfactory receptors. In terms of tissue distribution, predominantly expressed in olfactory and vomeronasal organs, in mature olfactory sensory neurons.

The protein resides in the cell membrane. Functionally, specifically promotes functional cell surface expression of olfactory receptors, but not of other GPCRs. This chain is Receptor-transporting protein 2 (Rtp2), found in Mus musculus (Mouse).